We begin with the raw amino-acid sequence, 206 residues long: 2,3-bisphosphoglycerate-dependent phosphoglycerate mutase (206 aa).

Substrate contacts are provided by residues 9-16 (RHGQSEWN), 22-23 (TG), arginine 61, 88-91 (ERDY), lysine 99, 115-116 (RR), and 159-160 (GN). Residue histidine 10 is the Tele-phosphohistidine intermediate of the active site. Catalysis depends on glutamate 88, which acts as the Proton donor/acceptor.

It belongs to the phosphoglycerate mutase family. BPG-dependent PGAM subfamily. Homodimer.

The enzyme catalyses (2R)-2-phosphoglycerate = (2R)-3-phosphoglycerate. It participates in carbohydrate degradation; glycolysis; pyruvate from D-glyceraldehyde 3-phosphate: step 3/5. Its function is as follows. Catalyzes the interconversion of 2-phosphoglycerate and 3-phosphoglycerate. This is 2,3-bisphosphoglycerate-dependent phosphoglycerate mutase from Bartonella quintana (strain Toulouse) (Rochalimaea quintana).